A 204-amino-acid polypeptide reads, in one-letter code: Peptidyl-tRNA hydrolase (204 aa).

Position 14 (Tyr14) interacts with tRNA. Residue His19 is the Proton acceptor of the active site. Residues Tyr64, Asn66, and Asn112 each contribute to the tRNA site.

Belongs to the PTH family. As to quaternary structure, monomer.

It localises to the cytoplasm. The enzyme catalyses an N-acyl-L-alpha-aminoacyl-tRNA + H2O = an N-acyl-L-amino acid + a tRNA + H(+). Its function is as follows. Hydrolyzes ribosome-free peptidyl-tRNAs (with 1 or more amino acids incorporated), which drop off the ribosome during protein synthesis, or as a result of ribosome stalling. In terms of biological role, catalyzes the release of premature peptidyl moieties from peptidyl-tRNA molecules trapped in stalled 50S ribosomal subunits, and thus maintains levels of free tRNAs and 50S ribosomes. In Nitrobacter hamburgensis (strain DSM 10229 / NCIMB 13809 / X14), this protein is Peptidyl-tRNA hydrolase.